We begin with the raw amino-acid sequence, 383 residues long: S-adenosylmethionine synthase (383 aa).

ATP is bound at residue His-15. Residue Asp-17 coordinates Mg(2+). Glu-43 serves as a coordination point for K(+). The L-methionine site is built by Glu-56 and Gln-99. A flexible loop region spans residues 99 to 109 (QSPDINQGVDR). Residues 164-166 (DAK), 230-231 (RF), Asp-239, 245-246 (RK), Ala-262, and Lys-266 contribute to the ATP site. Asp-239 is an L-methionine binding site. Residue Lys-270 participates in L-methionine binding.

It belongs to the AdoMet synthase family. In terms of assembly, homotetramer; dimer of dimers. Requires Mg(2+) as cofactor. K(+) is required as a cofactor.

The protein resides in the cytoplasm. The catalysed reaction is L-methionine + ATP + H2O = S-adenosyl-L-methionine + phosphate + diphosphate. It functions in the pathway amino-acid biosynthesis; S-adenosyl-L-methionine biosynthesis; S-adenosyl-L-methionine from L-methionine: step 1/1. Catalyzes the formation of S-adenosylmethionine (AdoMet) from methionine and ATP. The overall synthetic reaction is composed of two sequential steps, AdoMet formation and the subsequent tripolyphosphate hydrolysis which occurs prior to release of AdoMet from the enzyme. This chain is S-adenosylmethionine synthase, found in Pseudoalteromonas translucida (strain TAC 125).